The chain runs to 158 residues: Interleukin-36 alpha (158 aa).

Positions 1 to 5 are excised as a propeptide; sequence MEKAL. 3'-nitrotyrosine is present on Tyr96.

This sequence belongs to the IL-1 family. Interacts with TMED10; the interaction mediates the translocation from the cytoplasm into the ERGIC (endoplasmic reticulum-Golgi intermediate compartment) and thereby secretion. Post-translationally, N-terminal truncation leads to a dramatic enhancement of its activity (&gt;1000-fold). Expressed in immune system and fetal brain, but not in other tissues tested or in multiple hematopoietic cell lines. Predominantly expressed in skin keratinocytes but not in fibroblasts, endothelial cells or melanocytes. Increased in lesional psoriasis skin.

Its subcellular location is the cytoplasm. The protein resides in the secreted. Cytokine that binds to and signals through the IL1RL2/IL-36R receptor which in turn activates NF-kappa-B and MAPK signaling pathways in target cells linked to a pro-inflammatory response. Part of the IL-36 signaling system that is thought to be present in epithelial barriers and to take part in local inflammatory response; similar to the IL-1 system with which it shares the coreceptor IL1RAP. Seems to be involved in skin inflammatory response by acting on keratinocytes, dendritic cells and indirectly on T-cells to drive tissue infiltration, cell maturation and cell proliferation. In cultured keratinocytes induces the expression of macrophage, T-cell, and neutrophil chemokines, such as CCL3, CCL4, CCL5, CCL2, CCL17, CCL22, CL20, CCL5, CCL2, CCL17, CCL22, CXCL8, CCL20 and CXCL1, and the production of pro-inflammatory cytokines such as TNF-alpha, IL-8 and IL-6. In cultured monocytes up-regulates expression of IL-1A, IL-1B and IL-6. In myeloid dendritic cells involved in cell maturation by up-regulating surface expression of CD83, CD86 and HLA-DR. In monocyte-derived dendritic cells facilitates dendritic cell maturation and drives T-cell proliferation. May play a role in pro-inflammatory effects in the lung. This chain is Interleukin-36 alpha, found in Homo sapiens (Human).